The chain runs to 56 residues: Ribosome modulation factor (56 aa).

This sequence belongs to the ribosome modulation factor family.

The protein resides in the cytoplasm. Its function is as follows. During stationary phase, converts 70S ribosomes to an inactive dimeric form (100S ribosomes). The protein is Ribosome modulation factor of Serratia proteamaculans (strain 568).